The chain runs to 238 residues: tRNA (guanine-N(7)-)-methyltransferase (238 aa).

S-adenosyl-L-methionine-binding residues include Glu62, Glu87, Asp119, and Asp141. The active site involves Asp141. Substrate-binding positions include Lys145, Asp177, and 216–219; that span reads TRYE.

Belongs to the class I-like SAM-binding methyltransferase superfamily. TrmB family.

The catalysed reaction is guanosine(46) in tRNA + S-adenosyl-L-methionine = N(7)-methylguanosine(46) in tRNA + S-adenosyl-L-homocysteine. Its pathway is tRNA modification; N(7)-methylguanine-tRNA biosynthesis. Its function is as follows. Catalyzes the formation of N(7)-methylguanine at position 46 (m7G46) in tRNA. This Novosphingobium aromaticivorans (strain ATCC 700278 / DSM 12444 / CCUG 56034 / CIP 105152 / NBRC 16084 / F199) protein is tRNA (guanine-N(7)-)-methyltransferase.